The chain runs to 356 residues: Putative transposase y4zB (356 aa).

The segment covering 1–19 has biased composition (low complexity); the sequence is MITTGTPTTRRSAAGTAGA. Disordered regions lie at residues 1 to 54 and 334 to 356; these read MITT…PLAD and PPPV…FAYV.

The protein belongs to the transposase 11 family.

The chain is Putative transposase y4zB from Sinorhizobium fredii (strain NBRC 101917 / NGR234).